The sequence spans 169 residues: uncharacterized protein (169 aa).

To M.tuberculosis Rv1480.

This is an uncharacterized protein from Mycobacterium avium.